The sequence spans 218 residues: Elongation factor Ts (218 aa).

Positions 82-85 (TDFV) are involved in Mg(2+) ion dislocation from EF-Tu.

It belongs to the EF-Ts family.

It is found in the cytoplasm. Functionally, associates with the EF-Tu.GDP complex and induces the exchange of GDP to GTP. It remains bound to the aminoacyl-tRNA.EF-Tu.GTP complex up to the GTP hydrolysis stage on the ribosome. This is Elongation factor Ts from Prochlorococcus marinus (strain MIT 9215).